The chain runs to 203 residues: Translation initiation factor IF-3 (203 aa).

The protein belongs to the IF-3 family. As to quaternary structure, monomer.

Its subcellular location is the cytoplasm. Functionally, IF-3 binds to the 30S ribosomal subunit and shifts the equilibrium between 70S ribosomes and their 50S and 30S subunits in favor of the free subunits, thus enhancing the availability of 30S subunits on which protein synthesis initiation begins. The protein is Translation initiation factor IF-3 of Corynebacterium efficiens (strain DSM 44549 / YS-314 / AJ 12310 / JCM 11189 / NBRC 100395).